We begin with the raw amino-acid sequence, 375 residues long: Chaperone protein DnaJ (375 aa).

One can recognise a J domain in the interval 6–71 (DYYEILGVSR…DKRARYDQYG (66 aa)). The segment at 132–214 (GTTKKITIPR…CQGSGKVRKQ (83 aa)) adopts a CR-type zinc-finger fold. Zn(2+)-binding residues include Cys-145, Cys-148, Cys-162, Cys-165, Cys-188, Cys-191, Cys-202, and Cys-205. CXXCXGXG motif repeat units lie at residues 145 to 152 (CDTCNGTG), 162 to 169 (CPQCNGSG), 188 to 195 (CDRCGGRG), and 202 to 209 (CPTCQGSG). Residues 222–243 (PPGVDTGTRLRMPNEGEAGDKG) are disordered.

Belongs to the DnaJ family. As to quaternary structure, homodimer. Zn(2+) is required as a cofactor.

The protein resides in the cytoplasm. Functionally, participates actively in the response to hyperosmotic and heat shock by preventing the aggregation of stress-denatured proteins and by disaggregating proteins, also in an autonomous, DnaK-independent fashion. Unfolded proteins bind initially to DnaJ; upon interaction with the DnaJ-bound protein, DnaK hydrolyzes its bound ATP, resulting in the formation of a stable complex. GrpE releases ADP from DnaK; ATP binding to DnaK triggers the release of the substrate protein, thus completing the reaction cycle. Several rounds of ATP-dependent interactions between DnaJ, DnaK and GrpE are required for fully efficient folding. Also involved, together with DnaK and GrpE, in the DNA replication of plasmids through activation of initiation proteins. This is Chaperone protein DnaJ from Halothermothrix orenii (strain H 168 / OCM 544 / DSM 9562).